Reading from the N-terminus, the 305-residue chain is MAREKSTDDGGGWKKFLWDSEKKQVLGRTGTSWFKIFVFYLIFYGCLAGIFIGTIQVMLLTISDFEPKYQDRVAPPGLSHSPYAVKTEISFSVSNPNSYENHVNGLKELLKNYNESKQDGNTPFEDCGVIPADYITRGPIEESQGQKRVCRFLLQWLKNCSGIDDPSYGYSEGKPCIIAKLNRILGFYPKPPKNGTDLPEALQANYNQYVLPIHCQAKKEEDKVRIGTIEYFGMGGVGGFPLQYYPYYGKRLQKNYLQPLVGIQFTNLTHNVELRVECKVFGDNIAYSEKDRSLGRFEVKIEVKS.

The Cytoplasmic portion of the chain corresponds to 1–32 (MAREKSTDDGGGWKKFLWDSEKKQVLGRTGTS). A helical; Signal-anchor for type II membrane protein transmembrane segment spans residues 33–53 (WFKIFVFYLIFYGCLAGIFIG). Residues 54–305 (TIQVMLLTIS…RFEVKIEVKS (252 aa)) are Extracellular-facing. N-linked (GlcNAc...) asparagine glycosylation is present at asparagine 114. A disulfide bridge links cysteine 127 with cysteine 150. An N-linked (GlcNAc...) asparagine glycan is attached at asparagine 159. Cysteine 160 and cysteine 176 form a disulfide bridge. N-linked (GlcNAc...) asparagine glycans are attached at residues asparagine 194 and asparagine 267. Cysteine 215 and cysteine 278 are oxidised to a cystine.

The protein belongs to the X(+)/potassium ATPases subunit beta family. The sodium/potassium-transporting ATPase is composed of a catalytic alpha subunit, an auxiliary non-catalytic beta subunit and an additional regulatory subunit.

The protein localises to the cell membrane. In terms of biological role, this is the non-catalytic component of the active enzyme, which catalyzes the hydrolysis of ATP coupled with the exchange of Na(+) and K(+) ions across the plasma membrane. The beta subunit regulates, through assembly of alpha/beta heterodimers, the number of sodium pumps transported to the plasma membrane. This is Sodium/potassium-transporting ATPase subunit beta-1 (atp1b1) from Tetronarce californica (Pacific electric ray).